A 68-amino-acid chain; its full sequence is UPF0434 protein BTH_I0741 (68 aa).

Belongs to the UPF0434 family.

The protein is UPF0434 protein BTH_I0741 of Burkholderia thailandensis (strain ATCC 700388 / DSM 13276 / CCUG 48851 / CIP 106301 / E264).